Here is a 98-residue protein sequence, read N- to C-terminus: NADH-ubiquinone oxidoreductase chain 4L (98 aa).

3 consecutive transmembrane segments (helical) span residues 1 to 21 (MPPI…GMLV), 29 to 49 (SLLC…TMAL), and 61 to 81 (IVLL…LVMV).

It belongs to the complex I subunit 4L family. Core subunit of respiratory chain NADH dehydrogenase (Complex I) which is composed of 45 different subunits.

It localises to the mitochondrion inner membrane. The catalysed reaction is a ubiquinone + NADH + 5 H(+)(in) = a ubiquinol + NAD(+) + 4 H(+)(out). Its function is as follows. Core subunit of the mitochondrial membrane respiratory chain NADH dehydrogenase (Complex I) which catalyzes electron transfer from NADH through the respiratory chain, using ubiquinone as an electron acceptor. Part of the enzyme membrane arm which is embedded in the lipid bilayer and involved in proton translocation. This chain is NADH-ubiquinone oxidoreductase chain 4L (MT-ND4L), found in Orycteropus afer (Aardvark).